A 2183-amino-acid polypeptide reads, in one-letter code: DNA polymerase epsilon catalytic subunit A (2183 aa).

The Zn(2+) site is built by Cys2066, Cys2069, Cys2090, and Cys2093. The CysA-type zinc-finger motif lies at 2066–2093 (CFKCKNPCDLDLCKDSCCTKSGFRCPLC). [4Fe-4S] cluster-binding residues include Cys2124, Cys2127, Cys2139, and Cys2141. Positions 2124–2141 (CDKCRRVKEYELTEFCPC) match the CysB motif motif.

It belongs to the DNA polymerase type-B family. Heterotetramer. Consists of 4 subunits: POL2, DPB2, DPB3 and DPB4. Requires [4Fe-4S] cluster as cofactor.

The protein localises to the nucleus. The catalysed reaction is DNA(n) + a 2'-deoxyribonucleoside 5'-triphosphate = DNA(n+1) + diphosphate. Its function is as follows. DNA polymerase II participates in chromosomal DNA replication. In Yarrowia lipolytica (strain CLIB 122 / E 150) (Yeast), this protein is DNA polymerase epsilon catalytic subunit A (POL2).